Here is a 314-residue protein sequence, read N- to C-terminus: D-alanine--D-alanine ligase (314 aa).

The region spanning 115–310 is the ATP-grasp domain; sequence KQVWQSVGLV…FNELVLEILA (196 aa). 141–196 provides a ligand contact to ATP; that stretch reads LDSLGGQGFVKPAHEGSSIGMSVVSTAQELKAAYEKAAHYDAKVLVERRIVGREFT. Mg(2+) is bound by residues Asp264, Glu277, and Asn279.

It belongs to the D-alanine--D-alanine ligase family. Requires Mg(2+) as cofactor. The cofactor is Mn(2+).

It is found in the cytoplasm. It carries out the reaction 2 D-alanine + ATP = D-alanyl-D-alanine + ADP + phosphate + H(+). The protein operates within cell wall biogenesis; peptidoglycan biosynthesis. In terms of biological role, cell wall formation. The chain is D-alanine--D-alanine ligase from Saccharophagus degradans (strain 2-40 / ATCC 43961 / DSM 17024).